The primary structure comprises 398 residues: Tyrosine--tRNA ligase (398 aa).

The short motif at 48-57 is the 'HIGH' region element; sequence PTGADIHLGH. A 'KMSKS' region motif is present at residues 235 to 239; sequence KMSKS. K238 is an ATP binding site. One can recognise an S4 RNA-binding domain in the interval 334 to 398; the sequence is VKLAYLLGAT…GKNKFVRLVL (65 aa).

Belongs to the class-I aminoacyl-tRNA synthetase family. TyrS type 2 subfamily. Homodimer.

Its subcellular location is the cytoplasm. It catalyses the reaction tRNA(Tyr) + L-tyrosine + ATP = L-tyrosyl-tRNA(Tyr) + AMP + diphosphate + H(+). Catalyzes the attachment of tyrosine to tRNA(Tyr) in a two-step reaction: tyrosine is first activated by ATP to form Tyr-AMP and then transferred to the acceptor end of tRNA(Tyr). This is Tyrosine--tRNA ligase from Trichormus variabilis (strain ATCC 29413 / PCC 7937) (Anabaena variabilis).